The chain runs to 373 residues: UDP-N-acetylglucosamine--N-acetylmuramyl-(pentapeptide) pyrophosphoryl-undecaprenol N-acetylglucosamine transferase (373 aa).

UDP-N-acetyl-alpha-D-glucosamine contacts are provided by residues 13-15 (TGG), Asn-124, Arg-165, Ser-192, and Gln-293.

This sequence belongs to the glycosyltransferase 28 family. MurG subfamily.

It is found in the cell inner membrane. The catalysed reaction is di-trans,octa-cis-undecaprenyl diphospho-N-acetyl-alpha-D-muramoyl-L-alanyl-D-glutamyl-meso-2,6-diaminopimeloyl-D-alanyl-D-alanine + UDP-N-acetyl-alpha-D-glucosamine = di-trans,octa-cis-undecaprenyl diphospho-[N-acetyl-alpha-D-glucosaminyl-(1-&gt;4)]-N-acetyl-alpha-D-muramoyl-L-alanyl-D-glutamyl-meso-2,6-diaminopimeloyl-D-alanyl-D-alanine + UDP + H(+). The protein operates within cell wall biogenesis; peptidoglycan biosynthesis. Functionally, cell wall formation. Catalyzes the transfer of a GlcNAc subunit on undecaprenyl-pyrophosphoryl-MurNAc-pentapeptide (lipid intermediate I) to form undecaprenyl-pyrophosphoryl-MurNAc-(pentapeptide)GlcNAc (lipid intermediate II). This Sinorhizobium fredii (strain NBRC 101917 / NGR234) protein is UDP-N-acetylglucosamine--N-acetylmuramyl-(pentapeptide) pyrophosphoryl-undecaprenol N-acetylglucosamine transferase.